The chain runs to 33 residues: Ranatuerin-1T (33 aa).

A disulfide bridge connects residues C27 and C33.

In terms of tissue distribution, expressed by the skin glands.

It is found in the secreted. In terms of biological role, antibacterial activity against Gram-positive bacterium S.aureus and Gram-negative bacterium E.coli. No activity against C.albicans. The chain is Ranatuerin-1T from Rana temporaria (European common frog).